Reading from the N-terminus, the 343-residue chain is MHIICKSQCGNRAALKRPKTGDALCKECFFAAFEAEIHHTISSSNLFRRGEKVAVAASGGKDSTVLAHVLKLLNERHNYGLELVLLSIDEGITGYRDDSLETVKQNRDDYQMPLKILSYEELYGWTMDRIVAQIGRSNNCTFCGVFRRQALDRGAKLLGVDSIATGHNADDIAETVLMNVLRGDTARLRRCTSIRTGGGEDTIPRVKPLKYSYEKEIVMYAHYKKLVYFSTECVFAPNAYRGHARAFLKDLEKVRPSVIMDIIYSGEQLRFKDTVKKPERGTCTRCGFVSSQQPCKACVLLEGLNRGLPKLGIGKKSKGERMIAKQNQELALRERANLVKNDF.

This sequence belongs to the TtcA family. CTU1/NCS6/ATPBD3 subfamily.

It localises to the cytoplasm. The protein operates within tRNA modification; 5-methoxycarbonylmethyl-2-thiouridine-tRNA biosynthesis. Plays a central role in 2-thiolation of mcm(5)S(2)U at tRNA wobble positions of tRNA(Lys), tRNA(Glu) and tRNA(Gln). Directly binds tRNAs and probably acts by catalyzing adenylation of tRNAs, an intermediate required for 2-thiolation. It is unclear whether it acts as a sulfurtransferase that transfers sulfur from thiocarboxylated URM1 onto the uridine of tRNAs at wobble position. This is Cytoplasmic tRNA 2-thiolation protein 1 from Drosophila melanogaster (Fruit fly).